A 158-amino-acid polypeptide reads, in one-letter code: GTP-dependent dephospho-CoA kinase (158 aa).

Residues D35, V36, D54, K56, E109, and D132 each contribute to the GTP site.

It belongs to the GTP-dependent DPCK family.

It carries out the reaction 3'-dephospho-CoA + GTP = GDP + CoA + H(+). It participates in cofactor biosynthesis; coenzyme A biosynthesis. Functionally, catalyzes the GTP-dependent phosphorylation of the 3'-hydroxyl group of dephosphocoenzyme A to form coenzyme A (CoA). In Methanococcus maripaludis (strain C7 / ATCC BAA-1331), this protein is GTP-dependent dephospho-CoA kinase.